A 467-amino-acid chain; its full sequence is Mothers against decapentaplegic homolog 2 (467 aa).

An N-acetylserine modification is found at serine 2. The residue at position 8 (threonine 8) is a Phosphothreonine. The 167-residue stretch at 10-176 (PVVKRLLGWK…YQRVETPVLP (167 aa)) folds into the MH1 domain. Position 19 is an N6-acetyllysine (lysine 19). Residues cysteine 74, cysteine 149, cysteine 161, and histidine 166 each contribute to the Zn(2+) site. Over residues 207–217 (PAGIEPQSNYI) the composition is skewed to polar residues. The tract at residues 207–251 (PAGIEPQSNYIPETPPPGYISEDGETSDQQLNQSMDTGSPAELSP) is disordered. A Phosphothreonine modification is found at threonine 220. The short motif at 221-225 (PPPGY) is the PY-motif element. Residues 233 to 243 (SDQQLNQSMDT) are compositionally biased toward polar residues. Residue serine 240 is modified to Phosphoserine; by CAMK2. Residues serine 245, serine 250, serine 255, serine 458, serine 460, and serine 464 each carry the phosphoserine modification. Residues 274–467 (WCSIAYYELN…SPSVRCSSMS (194 aa)) enclose the MH2 domain. Phosphoserine; by TGFBR1 occurs at positions 465 and 467.

The protein belongs to the dwarfin/SMAD family. As to quaternary structure, monomer; in the absence of TGF-beta. Heterodimer; in the presence of TGF-beta. Forms a heterodimer with co-SMAD, SMAD4, in the nucleus to form the transactivation complex SMAD2/SMAD4. Found in a complex with SMAD3 and TRIM33 upon addition of TGF-beta. Identified in a complex that contains at least ZNF451, SMAD2, SMAD3 and SMAD4. Interacts (via the MH2 domain) with ZFYVE9; may form trimers with the SMAD4 co-SMAD. Interacts with TAZ/WWRT1. Interacts with FOXH1. Interacts with SNW1. Interacts with CREB-binding protein (CBP) and EP300. Interacts with SNON. Interacts with ALK4/ACVR1B. Interacts with SKOR1. Interacts with SKOR2. Interacts with PRDM16. Interacts (via MH2 domain) with LEMD3. Interacts with RBPMS. Interacts with WWP1. Interacts (dephosphorylated form, via the MH1 and MH2 domains) with RANBP3 (via its C-terminal R domain); the interaction results in the export of dephosphorylated SMAD3 out of the nucleus and termination of the TGF-beta signaling. Interacts with PDPK1 (via PH domain). Interacts with DAB2; the interactions are enhanced upon TGF-beta stimulation. Interacts with USP15. Interacts with PPP5C. Interacts with LDLRAD4 (via the SMAD interaction motif). Interacts (via MH2 domain) with PMEPA1 (via the SMAD interaction motif). Interacts with ZFHX3. Interacts with ZNF451. Interacts with SMURF2 when phosphorylated on Ser-465/467. Interacts with PPM1A. Interacts with TGF-beta. Interacts with TGFBR1. Interacts with TGIF. Interacts with SMAD3 and TRIM33. Interacts with ZNF580. Interacts with NEDD4L in response to TGF-beta. Interacts with HGS. Interacts with AIP1. Interacts with WWP1. Interacts with PML. Interacts weakly with ZNF8. Interacts (when phosphorylated) with RNF111; RNF111 acts as an enhancer of the transcriptional responses by mediating ubiquitination and degradation of SMAD2 inhibitors. Interacts with YAP1 (when phosphorylated at 'Ser-112'). Interacts when phosphorylated with IPO7; the interaction facilitates translocation of SMAD2 to the nucleus. Interacts with MTMR4; negatively regulates TGF-beta signaling through SMAD2 dephosphorylation and retention in endosomes. In response to TGF-beta, phosphorylated on the C-terminal SXS motif by TGF-beta and activin type 1 receptor kinases, phosphorylation declines progressively in a KMT5A-dependent manner. Phosphorylation in this motif is required for interaction with a number of proteins including SMURF2, SNON and SMAD4 in response to TGF-beta. Dephosphorylated in this motif by PPM1A leading to disruption of the SMAD2/3-SMAD4 complex, nuclear export and termination of the TGF-beta signaling. In response to decorin, the naturally occurring inhibitor of TGF-beta signaling, phosphorylated on Ser-240 by CaMK2. Phosphorylated by MAPK3 upon EGF stimulation; which increases transcriptional activity and stability, and is blocked by calmodulin. Phosphorylated by PDPK1. In terms of processing, acetylated on Lys-19 by coactivators in response to TGF-beta signaling, which increases transcriptional activity. Post-translationally, in response to TGF-beta, ubiquitinated by NEDD4L; which promotes its degradation. Monoubiquitinated, leading to prevent DNA-binding. Deubiquitination by USP15 alleviates inhibition and promotes activation of TGF-beta target genes. Ubiquitinated by RNF111, leading to its degradation: only SMAD2 proteins that are 'in use' are targeted by RNF111, RNF111 playing a key role in activating SMAD2 and regulating its turnover. As to expression, expressed in cardiomyocytes.

It localises to the cytoplasm. Its subcellular location is the nucleus. Its function is as follows. Receptor-regulated SMAD (R-SMAD) that is an intracellular signal transducer and transcriptional modulator activated by TGF-beta (transforming growth factor) and activin type 1 receptor kinases. Binds the TRE element in the promoter region of many genes that are regulated by TGF-beta and, on formation of the SMAD2/SMAD4 complex, activates transcription. Promotes TGFB1-mediated transcription of odontoblastic differentiation genes in dental papilla cells. Positively regulates PDPK1 kinase activity by stimulating its dissociation from the 14-3-3 protein YWHAQ which acts as a negative regulator. The protein is Mothers against decapentaplegic homolog 2 (Smad2) of Rattus norvegicus (Rat).